We begin with the raw amino-acid sequence, 527 residues long: Peptide chain release factor 3 (527 aa).

The tr-type G domain occupies 11-278; the sequence is AKRRTFAIIS…GFVEWAPAPL (268 aa). GTP contacts are provided by residues 20–27, 87–91, and 141–144; these read SHPDAGKT, DTPGH, and NKMD.

This sequence belongs to the TRAFAC class translation factor GTPase superfamily. Classic translation factor GTPase family. PrfC subfamily.

The protein localises to the cytoplasm. Functionally, increases the formation of ribosomal termination complexes and stimulates activities of RF-1 and RF-2. It binds guanine nucleotides and has strong preference for UGA stop codons. It may interact directly with the ribosome. The stimulation of RF-1 and RF-2 is significantly reduced by GTP and GDP, but not by GMP. This Teredinibacter turnerae (strain ATCC 39867 / T7901) protein is Peptide chain release factor 3.